We begin with the raw amino-acid sequence, 414 residues long: MSWDQVWIDINIATMSPNISEPYGAITDAALAVQDGKIAWVGKRSDLPEFDVFATPIYKGKGGWITPGLIDAHTHLVFAGNRANEFELRLNGASYEEIARSGGGIISTVNACREADEAELFELGRQRLNALAKEGVTTVEIKSGYGLDIETELKILRVARELGKHHHVDVKTTFLGAHAIPPEYKDSPGSTERSDAYVDLVINEMLPKVIAENLADAVDVFCENIAFNLEQTERVLSAAKDAGLDIKLHAEQLSNMGGSAMAARLGAKSVDHIEYLDEDGVKALSESGTCATILPGAFYFLRETQHPPIDLLRKYKVPMVVASDYNPGSSPLCSSLLMLNMACTLLRLTPEEALAGMTRNAAKALGIEDQVGVIEVGMTADFCMWNISTPAELAYTYGVASCVDVVKNGHLVHQ.

Residues histidine 73 and histidine 75 each contribute to the Fe(3+) site. 2 residues coordinate Zn(2+): histidine 73 and histidine 75. 4-imidazolone-5-propanoate contacts are provided by arginine 82, tyrosine 145, and histidine 178. An N-formimidoyl-L-glutamate-binding site is contributed by tyrosine 145. Histidine 249 contributes to the Fe(3+) binding site. Residue histidine 249 coordinates Zn(2+). Glutamine 252 contacts 4-imidazolone-5-propanoate. Residue aspartate 324 participates in Fe(3+) binding. Aspartate 324 lines the Zn(2+) pocket. Asparagine 326 and glycine 328 together coordinate N-formimidoyl-L-glutamate. Serine 329 contacts 4-imidazolone-5-propanoate.

It belongs to the metallo-dependent hydrolases superfamily. HutI family. Requires Zn(2+) as cofactor. It depends on Fe(3+) as a cofactor.

It is found in the cytoplasm. The enzyme catalyses 4-imidazolone-5-propanoate + H2O = N-formimidoyl-L-glutamate. Its pathway is amino-acid degradation; L-histidine degradation into L-glutamate; N-formimidoyl-L-glutamate from L-histidine: step 3/3. Its function is as follows. Catalyzes the hydrolytic cleavage of the carbon-nitrogen bond in imidazolone-5-propanoate to yield N-formimidoyl-L-glutamate. It is the third step in the universal histidine degradation pathway. This is Imidazolonepropionase from Shewanella pealeana (strain ATCC 700345 / ANG-SQ1).